A 126-amino-acid polypeptide reads, in one-letter code: Fluoride-specific ion channel FluC 3 (126 aa).

4 helical membrane-spanning segments follow: residues 7–27, 37–57, 68–87, and 101–121; these read MWVG…GLSI, LGTF…SILF, LMNT…FSSM, and AIAA…AAFG. Na(+) is bound by residues glycine 79 and threonine 82.

It belongs to the fluoride channel Fluc/FEX (TC 1.A.43) family.

It is found in the cell inner membrane. The enzyme catalyses fluoride(in) = fluoride(out). With respect to regulation, na(+) is not transported, but it plays an essential structural role and its presence is essential for fluoride channel function. Its function is as follows. Fluoride-specific ion channel. Important for reducing fluoride concentration in the cell, thus reducing its toxicity. The sequence is that of Fluoride-specific ion channel FluC 3 from Yersinia pestis.